Consider the following 179-residue polypeptide: Crossover junction endodeoxyribonuclease RuvC (179 aa).

Active-site residues include Asp-7 and Glu-67. Asp-7 and Glu-67 together coordinate Mn(2+). Positions 68 to 74 (DQILRRQ) match the DNA-binding loop motif. Catalysis depends on residues His-139 and Asp-142. Residue His-139 participates in Mn(2+) binding.

It belongs to the RuvC family. As to quaternary structure, homodimer which binds Holliday junction (HJ) DNA. The HJ becomes 2-fold symmetrical on binding to RuvC with unstacked arms; it has a different conformation from HJ DNA in complex with RuvA. In the full resolvosome a probable DNA-RuvA(4)-RuvB(12)-RuvC(2) complex forms which resolves the HJ. The cofactor is Mn(2+).

Its subcellular location is the cytoplasm. The catalysed reaction is Endonucleolytic cleavage at a junction such as a reciprocal single-stranded crossover between two homologous DNA duplexes (Holliday junction).. Its function is as follows. The RuvA-RuvB-RuvC complex processes Holliday junction (HJ) DNA during genetic recombination and DNA repair. Endonuclease that resolves HJ intermediates. Cleaves cruciform DNA by making single-stranded nicks across the HJ at symmetrical positions within the homologous arms, probably yielding a 5'-phosphate and a 3'-hydroxyl group; requires a central core of homology in the junction. The consensus cleavage sequence is 5'-(G/C)TC(C/G)-3' (a different site than E.coli); cleavage occurs on the 3'-side of the TC dinucleotide at the point of strand exchange. Also resolves nicked HJ intermediates, replication forks and Y-junction DNA in vitro. HJ branch migration catalyzed by RuvA-RuvB allows RuvC to scan DNA until it finds its consensus sequence, where it cleaves and resolves the cruciform DNA. Functionally, binds HJ DNA independently of homologous core or consensus sequence; Mn(2+) is not essential for binding but improves it, while &gt;1.0 mM Mg(2+) inhibit binding. Also binds Y-junction DNA less well. Requires a homologous core to cleave DNA. Another study shows divalent cations (Mn(2+), Mg(2+) and Ca(2+), tested up to 5.0 mM) improve DNA binding considerably over binding in their absence. This is Crossover junction endodeoxyribonuclease RuvC from Deinococcus radiodurans (strain ATCC 13939 / DSM 20539 / JCM 16871 / CCUG 27074 / LMG 4051 / NBRC 15346 / NCIMB 9279 / VKM B-1422 / R1).